A 742-amino-acid polypeptide reads, in one-letter code: Mechanosensitive ion channel protein 9 (742 aa).

The disordered stretch occupies residues 1–117 (MAERRVSNGE…REENGGRSLR (117 aa)). Basic and acidic residues predominate over residues 17–26 (SDKEDSKDPR). Residues S28 and S36 each carry the phosphoserine modification. Over residues 105 to 117 (DSTREENGGRSLR) the composition is skewed to basic and acidic residues. Residues S142 and S145 each carry the phosphoserine modification. The next 6 helical transmembrane spans lie at 180-200 (AFLE…SLTI), 221-241 (MVTL…VFII), 261-281 (NVQV…LFDG), 292-312 (FLDF…LFLV), 524-544 (LITG…LDIA), and 559-579 (LAFM…FVFV).

Belongs to the MscS (TC 1.A.23) family. Detected in the epidermis, cortex, and endodermis of the root tip.

It localises to the cell membrane. In terms of biological role, mechanosensitive channel that opens in response to stretch forces in the membrane lipid bilayer. This Arabidopsis thaliana (Mouse-ear cress) protein is Mechanosensitive ion channel protein 9 (MSL9).